Here is a 347-residue protein sequence, read N- to C-terminus: Quinolinate synthase (347 aa).

His47 and Ser68 together coordinate iminosuccinate. Cys113 contributes to the [4Fe-4S] cluster binding site. Iminosuccinate contacts are provided by residues 139–141 (YAN) and Ser156. [4Fe-4S] cluster is bound at residue Cys200. Residues 226–228 (HPE) and Thr243 each bind iminosuccinate. Residue Cys297 coordinates [4Fe-4S] cluster.

Belongs to the quinolinate synthase family. Type 1 subfamily. It depends on [4Fe-4S] cluster as a cofactor.

Its subcellular location is the cytoplasm. It catalyses the reaction iminosuccinate + dihydroxyacetone phosphate = quinolinate + phosphate + 2 H2O + H(+). The protein operates within cofactor biosynthesis; NAD(+) biosynthesis; quinolinate from iminoaspartate: step 1/1. Functionally, catalyzes the condensation of iminoaspartate with dihydroxyacetone phosphate to form quinolinate. The polypeptide is Quinolinate synthase (Salmonella agona (strain SL483)).